The chain runs to 214 residues: Type 4 apparatus protein DotN (214 aa).

Residues C52, C55, C84, and C87 each coordinate Zn(2+).

The T4BSS is a complex nanomachine composed of several subcomplexes. This subunit is part of the Type IV Coupling Complex (T4CC), a subcomplex composed of the DotLMNYZ core and the IcmSW-LvgA adapter subunits, linked by the C-terminal tail of DotL. Six DotLMNYZ hetero-pentameric units may assemble into a hexameric nanomachine, forming an inner membrane channel for effectors to pass through. Interacts directly with DotL. Interacts with DotZ.

The protein localises to the cytoplasm. Functionally, component of the Dot/Icm type IVB secretion system (T4BSS), which is used to inject bacterial effector proteins into eukaryotic host cells. Part of a subcomplex which recruits effector proteins and delivers them to the core transmembrane subcomplex. This is Type 4 apparatus protein DotN from Legionella pneumophila subsp. pneumophila (strain Philadelphia 1 / ATCC 33152 / DSM 7513).